The chain runs to 381 residues: Queuine tRNA-ribosyltransferase (381 aa).

Asp92 acts as the Proton acceptor in catalysis. Residues 92–96 (DSGGF), Asp146, Gln190, and Gly217 contribute to the substrate site. Positions 248 to 254 (GVGRPED) are RNA binding. Catalysis depends on Asp267, which acts as the Nucleophile. The segment at 272–276 (TRNAR) is RNA binding; important for wobble base 34 recognition. Residues Cys305, Cys307, Cys310, and His337 each coordinate Zn(2+).

The protein belongs to the queuine tRNA-ribosyltransferase family. As to quaternary structure, homodimer. Within each dimer, one monomer is responsible for RNA recognition and catalysis, while the other monomer binds to the replacement base PreQ1. Zn(2+) is required as a cofactor.

It catalyses the reaction 7-aminomethyl-7-carbaguanine + guanosine(34) in tRNA = 7-aminomethyl-7-carbaguanosine(34) in tRNA + guanine. Its pathway is tRNA modification; tRNA-queuosine biosynthesis. Functionally, catalyzes the base-exchange of a guanine (G) residue with the queuine precursor 7-aminomethyl-7-deazaguanine (PreQ1) at position 34 (anticodon wobble position) in tRNAs with GU(N) anticodons (tRNA-Asp, -Asn, -His and -Tyr). Catalysis occurs through a double-displacement mechanism. The nucleophile active site attacks the C1' of nucleotide 34 to detach the guanine base from the RNA, forming a covalent enzyme-RNA intermediate. The proton acceptor active site deprotonates the incoming PreQ1, allowing a nucleophilic attack on the C1' of the ribose to form the product. After dissociation, two additional enzymatic reactions on the tRNA convert PreQ1 to queuine (Q), resulting in the hypermodified nucleoside queuosine (7-(((4,5-cis-dihydroxy-2-cyclopenten-1-yl)amino)methyl)-7-deazaguanosine). The protein is Queuine tRNA-ribosyltransferase of Xanthomonas campestris pv. campestris (strain 8004).